The following is a 338-amino-acid chain: Ketol-acid reductoisomerase (NADP(+)) (338 aa).

Residues 1–181 (MKVFYDKDAD…GGGRAGIIET (181 aa)) enclose the KARI N-terminal Rossmann domain. NADP(+)-binding positions include 24–27 (YGSQ), R47, and S52. Residue H107 is part of the active site. Residue G133 participates in NADP(+) binding. Residues 182-327 (NFREETETDL…AKLRAMMPWI (146 aa)) form the KARI C-terminal knotted domain. The Mg(2+) site is built by D190, E194, E226, and E230. Residue S251 coordinates substrate.

The protein belongs to the ketol-acid reductoisomerase family. Mg(2+) serves as cofactor.

It carries out the reaction (2R)-2,3-dihydroxy-3-methylbutanoate + NADP(+) = (2S)-2-acetolactate + NADPH + H(+). The catalysed reaction is (2R,3R)-2,3-dihydroxy-3-methylpentanoate + NADP(+) = (S)-2-ethyl-2-hydroxy-3-oxobutanoate + NADPH + H(+). It functions in the pathway amino-acid biosynthesis; L-isoleucine biosynthesis; L-isoleucine from 2-oxobutanoate: step 2/4. The protein operates within amino-acid biosynthesis; L-valine biosynthesis; L-valine from pyruvate: step 2/4. Its function is as follows. Involved in the biosynthesis of branched-chain amino acids (BCAA). Catalyzes an alkyl-migration followed by a ketol-acid reduction of (S)-2-acetolactate (S2AL) to yield (R)-2,3-dihydroxy-isovalerate. In the isomerase reaction, S2AL is rearranged via a Mg-dependent methyl migration to produce 3-hydroxy-3-methyl-2-ketobutyrate (HMKB). In the reductase reaction, this 2-ketoacid undergoes a metal-dependent reduction by NADPH to yield (R)-2,3-dihydroxy-isovalerate. This chain is Ketol-acid reductoisomerase (NADP(+)), found in Ralstonia nicotianae (strain ATCC BAA-1114 / GMI1000) (Ralstonia solanacearum).